The chain runs to 194 residues: Phosphoheptose isomerase (194 aa).

In terms of domain architecture, SIS spans 31-186 (ICQRFQAGNK…CEQVESRLFA (156 aa)). Position 46–48 (46–48 (NGG)) interacts with substrate. Positions 55 and 59 each coordinate Zn(2+). Residues glutamate 59, 88–89 (ND), 114–116 (STS), serine 119, and glutamine 166 contribute to the substrate site. Glutamine 166 and histidine 174 together coordinate Zn(2+).

The protein belongs to the SIS family. GmhA subfamily. The cofactor is Zn(2+).

The protein resides in the cytoplasm. It carries out the reaction 2 D-sedoheptulose 7-phosphate = D-glycero-alpha-D-manno-heptose 7-phosphate + D-glycero-beta-D-manno-heptose 7-phosphate. It functions in the pathway carbohydrate biosynthesis; D-glycero-D-manno-heptose 7-phosphate biosynthesis; D-glycero-alpha-D-manno-heptose 7-phosphate and D-glycero-beta-D-manno-heptose 7-phosphate from sedoheptulose 7-phosphate: step 1/1. Functionally, catalyzes the isomerization of sedoheptulose 7-phosphate in D-glycero-D-manno-heptose 7-phosphate. This chain is Phosphoheptose isomerase, found in Synechocystis sp. (strain ATCC 27184 / PCC 6803 / Kazusa).